We begin with the raw amino-acid sequence, 309 residues long: Ribonuclease Z (309 aa).

The Zn(2+) site is built by H63, H65, D67, H68, H145, D216, and H274. The active-site Proton acceptor is the D67.

This sequence belongs to the RNase Z family. Homodimer. Zn(2+) serves as cofactor.

The catalysed reaction is Endonucleolytic cleavage of RNA, removing extra 3' nucleotides from tRNA precursor, generating 3' termini of tRNAs. A 3'-hydroxy group is left at the tRNA terminus and a 5'-phosphoryl group is left at the trailer molecule.. Functionally, zinc phosphodiesterase, which displays some tRNA 3'-processing endonuclease activity. Probably involved in tRNA maturation, by removing a 3'-trailer from precursor tRNA. In Streptococcus pneumoniae (strain 70585), this protein is Ribonuclease Z.